We begin with the raw amino-acid sequence, 737 residues long: Exostosin-1c (737 aa).

Over Met-1–Lys-6 the chain is Cytoplasmic. A helical; Signal-anchor for type II membrane protein membrane pass occupies residues Tyr-7 to Gln-27. The Lumenal segment spans residues Glu-28–Val-737. N-linked (GlcNAc...) asparagine glycosylation is found at Asn-194 and Asn-322. 8 residues coordinate UDP-N-acetyl-alpha-D-glucosamine: Arg-432, Arg-540, Asp-556, Glu-557, Asp-558, Glu-644, Asp-645, and Arg-692. Asp-558 is a Mn(2+) binding site. Cys-643 and Cys-695 are oxidised to a cystine. Residue Asp-645 is part of the active site.

Belongs to the glycosyltransferase 47 family. Mn(2+) serves as cofactor.

It localises to the endoplasmic reticulum membrane. The catalysed reaction is 3-O-{[(1-&gt;4)-beta-D-GlcA-(1-&gt;4)-alpha-D-GlcNAc](n)-(1-&gt;4)-beta-D-GlcA-(1-&gt;3)-beta-D-Gal-(1-&gt;3)-beta-D-Gal-(1-&gt;4)-beta-D-Xyl}-L-seryl-[protein] + UDP-N-acetyl-alpha-D-glucosamine = 3-O-{alpha-D-GlcNAc-[(1-&gt;4)-beta-D-GlcA-(1-&gt;4)-alpha-D-GlcNAc](n)-(1-&gt;4)-beta-D-GlcA-(1-&gt;3)-beta-D-Gal-(1-&gt;3)-beta-D-Gal-(1-&gt;4)-beta-D-Xyl}-L-seryl-[protein] + UDP + H(+). The enzyme catalyses 3-O-{alpha-D-GlcNAc-[(1-&gt;4)-beta-D-GlcA-(1-&gt;4)-alpha-D-GlcNAc](n)-(1-&gt;4)-beta-D-GlcA-(1-&gt;3)-beta-D-Gal-(1-&gt;3)-beta-D-Gal-(1-&gt;4)-beta-D-Xyl}-L-seryl-[protein] + UDP-alpha-D-glucuronate = 3-O-{[(1-&gt;4)-beta-D-GlcA-(1-&gt;4)-alpha-D-GlcNAc](n+1)-(1-&gt;4)-beta-D-GlcA-(1-&gt;3)-beta-D-Gal-(1-&gt;3)-beta-D-Gal-(1-&gt;4)-beta-D-Xyl}-L-seryl-[protein] + UDP + H(+). Its pathway is protein modification; protein glycosylation. Functionally, glycosyltransferase required for the biosynthesis of heparan-sulfate. The protein is Exostosin-1c (ext1c) of Danio rerio (Zebrafish).